A 189-amino-acid chain; its full sequence is Inner membrane-spanning protein YciB (189 aa).

The next 5 helical transmembrane spans lie at 23 to 43 (ILLA…FVWW), 54 to 74 (ITLA…DAAF), 82 to 102 (VNWL…KTLI), 120 to 140 (LNLA…YVFK), and 150 to 170 (FKLF…GVYL).

This sequence belongs to the YciB family.

The protein localises to the cell inner membrane. Plays a role in cell envelope biogenesis, maintenance of cell envelope integrity and membrane homeostasis. The protein is Inner membrane-spanning protein YciB of Chromohalobacter salexigens (strain ATCC BAA-138 / DSM 3043 / CIP 106854 / NCIMB 13768 / 1H11).